Here is a 180-residue protein sequence, read N- to C-terminus: Nucleoside triphosphate/diphosphate phosphatase (180 aa).

Residue Arg26 is the Proton donor of the active site. 6 residues coordinate Mg(2+): Asn90, Asp106, Asp108, Asp110, Asp123, and Glu126.

It belongs to the Ntdp family. Requires Mg(2+) as cofactor.

The catalysed reaction is a ribonucleoside 5'-triphosphate + H2O = a ribonucleoside 5'-diphosphate + phosphate + H(+). It catalyses the reaction a ribonucleoside 5'-diphosphate + H2O = a ribonucleoside 5'-phosphate + phosphate + H(+). In terms of biological role, has nucleoside phosphatase activity towards nucleoside triphosphates and nucleoside diphosphates. This chain is Nucleoside triphosphate/diphosphate phosphatase, found in Staphylococcus aureus (strain MSSA476).